The following is a 481-amino-acid chain: MQWETVIGLEIHAQLSTQSKIFSASATSFGAEPNTQASLIDLGMPGTLPVLNAEAVRMAVKFGLAIDAHIAPQNVFARKNYFYPDLPKGYQTSQMDHPIVGKGHLDITLEDGTVKRIGITRAHLEEDAGKSLHEDFHGMSGIDLNRAGTPLLEIVSEPDIRSAKEAVAYVKAIHALVRYLGICDGNMAEGSLRCDCNVSVRPKGQEAFGTRAEIKNVNSFRFIEKAINHEIQRQIELIEDGGKVIQETRLYDPNKDETRSMRGKEEANDYRYFPCPDLLPVVIEQSFLDEVRSQLPELPTQKRERFQSQYGLSTYDASVLSASREMAEYFEEVAKVCGDAKLAANWVMGELSSLLNKEGLEIEQSPVSAEHLGGMILRIKDNTISGKIAKMVFEAMAAGEGSADAIIESKGLKQVTDSGAIEAMLDEVLAANAEQVEQYRASDEAKRGKMFGFFVGQAMKASKGKANPGQVNELLKKKLEG.

Belongs to the GatB/GatE family. GatB subfamily. As to quaternary structure, heterotrimer of A, B and C subunits.

It catalyses the reaction L-glutamyl-tRNA(Gln) + L-glutamine + ATP + H2O = L-glutaminyl-tRNA(Gln) + L-glutamate + ADP + phosphate + H(+). The enzyme catalyses L-aspartyl-tRNA(Asn) + L-glutamine + ATP + H2O = L-asparaginyl-tRNA(Asn) + L-glutamate + ADP + phosphate + 2 H(+). Allows the formation of correctly charged Asn-tRNA(Asn) or Gln-tRNA(Gln) through the transamidation of misacylated Asp-tRNA(Asn) or Glu-tRNA(Gln) in organisms which lack either or both of asparaginyl-tRNA or glutaminyl-tRNA synthetases. The reaction takes place in the presence of glutamine and ATP through an activated phospho-Asp-tRNA(Asn) or phospho-Glu-tRNA(Gln). This Ectopseudomonas mendocina (strain ymp) (Pseudomonas mendocina) protein is Aspartyl/glutamyl-tRNA(Asn/Gln) amidotransferase subunit B.